Here is a 148-residue protein sequence, read N- to C-terminus: Basic leucine zipper 4 (148 aa).

In terms of domain architecture, bZIP spans 48–97 (DDKKRRRTISNRESAKRSRMKKKKRFEELTEEVNRLNIRNQELKNRLANV). Residues 50–70 (KKRRRTISNRESAKRSRMKKK) are disordered. The segment at 50-72 (KKRRRTISNRESAKRSRMKKKKR) is basic motif. The segment at 76–90 (LTEEVNRLNIRNQEL) is leucine-zipper.

Its subcellular location is the nucleus. Its function is as follows. Probable transcription factor involved in somatic embryogenesis. Acts as a positive regulator of BHLH109. This Arabidopsis thaliana (Mouse-ear cress) protein is Basic leucine zipper 4.